Consider the following 312-residue polypeptide: Glycine--tRNA ligase alpha subunit (312 aa).

Belongs to the class-II aminoacyl-tRNA synthetase family. As to quaternary structure, tetramer of two alpha and two beta subunits.

It is found in the cytoplasm. It carries out the reaction tRNA(Gly) + glycine + ATP = glycyl-tRNA(Gly) + AMP + diphosphate. The polypeptide is Glycine--tRNA ligase alpha subunit (Methylobacillus flagellatus (strain ATCC 51484 / DSM 6875 / VKM B-1610 / KT)).